An 84-amino-acid polypeptide reads, in one-letter code: Beta-toxin Tf1a (84 aa).

Positions 1 to 20 are cleaved as a signal peptide; that stretch reads MKGMILFISCLLLIGIVVEC. The LCN-type CS-alpha/beta domain maps to 21-82; it reads KEGYLMDHEG…VWERATNRCG (62 aa). 4 cysteine pairs are disulfide-bonded: Cys31–Cys81, Cys35–Cys57, Cys43–Cys62, and Cys47–Cys64. A Cysteine amide modification is found at Cys81.

Belongs to the long (4 C-C) scorpion toxin superfamily. Sodium channel inhibitor family. Beta subfamily. In terms of tissue distribution, expressed by the venom gland.

Its subcellular location is the secreted. Functionally, beta toxins bind voltage-independently at site-4 of sodium channels (Nav) and shift the voltage of activation toward more negative potentials thereby affecting sodium channel activation and promoting spontaneous and repetitive firing. The toxin induces a leftward shift, on all channels tested (including Blattella germanica and Varroa destructor Nav1), displacing a change in voltage dependence activation to more hyperpolarized potentials. In addition, the toxin mostly inhibits peak current of hNav1.4/SCN4A (53% inhibition of peak current at 100 nM) and hNav1.5/SCN5A (71% inhibition). The polypeptide is Beta-toxin Tf1a (Tityus fasciolatus (Central Brazilian scorpion)).